We begin with the raw amino-acid sequence, 183 residues long: Small ribosomal subunit protein uS4 (183 aa).

Residues 106 to 168 (RRLETLVYKK…ETSPFTDENH (63 aa)) enclose the S4 RNA-binding domain. Residues 158–183 (NETSPFTDENHPLRMEMSGTKEEENE) form a disordered region. Basic and acidic residues predominate over residues 165–183 (DENHPLRMEMSGTKEEENE).

This sequence belongs to the universal ribosomal protein uS4 family. In terms of assembly, part of the 30S ribosomal subunit. Contacts protein S5. The interaction surface between S4 and S5 is involved in control of translational fidelity.

Functionally, one of the primary rRNA binding proteins, it binds directly to 16S rRNA where it nucleates assembly of the body of the 30S subunit. With S5 and S12 plays an important role in translational accuracy. In Picrophilus torridus (strain ATCC 700027 / DSM 9790 / JCM 10055 / NBRC 100828 / KAW 2/3), this protein is Small ribosomal subunit protein uS4.